Here is a 263-residue protein sequence, read N- to C-terminus: Purine nucleoside phosphorylase SERP0752 (263 aa).

Zn(2+)-binding residues include His-79, Cys-124, and His-141.

It belongs to the purine nucleoside phosphorylase YfiH/LACC1 family. In terms of assembly, homodimer. The cofactor is Cu(2+). Zn(2+) is required as a cofactor.

It catalyses the reaction adenosine + phosphate = alpha-D-ribose 1-phosphate + adenine. The catalysed reaction is S-methyl-5'-thioadenosine + phosphate = 5-(methylsulfanyl)-alpha-D-ribose 1-phosphate + adenine. It carries out the reaction inosine + phosphate = alpha-D-ribose 1-phosphate + hypoxanthine. The enzyme catalyses adenosine + H2O + H(+) = inosine + NH4(+). Its function is as follows. Purine nucleoside enzyme that catalyzes the phosphorolysis of adenosine and inosine nucleosides, yielding D-ribose 1-phosphate and the respective free bases, adenine and hypoxanthine. Also catalyzes the phosphorolysis of S-methyl-5'-thioadenosine into adenine and S-methyl-5-thio-alpha-D-ribose 1-phosphate. Also has adenosine deaminase activity. The chain is Purine nucleoside phosphorylase SERP0752 from Staphylococcus epidermidis (strain ATCC 35984 / DSM 28319 / BCRC 17069 / CCUG 31568 / BM 3577 / RP62A).